The primary structure comprises 139 residues: D-ribose pyranase (139 aa).

His20 (proton donor) is an active-site residue. Residues Asp28, His106, and 128-130 each bind substrate; that span reads YAN.

Belongs to the RbsD / FucU family. RbsD subfamily. In terms of assembly, homodecamer.

Its subcellular location is the cytoplasm. It catalyses the reaction beta-D-ribopyranose = beta-D-ribofuranose. Its pathway is carbohydrate metabolism; D-ribose degradation; D-ribose 5-phosphate from beta-D-ribopyranose: step 1/2. In terms of biological role, catalyzes the interconversion of beta-pyran and beta-furan forms of D-ribose. The polypeptide is D-ribose pyranase (Salmonella arizonae (strain ATCC BAA-731 / CDC346-86 / RSK2980)).